A 727-amino-acid polypeptide reads, in one-letter code: 5'-AMP-activated serine/threonine-protein kinase catalytic subunit alpha (727 aa).

A Protein kinase domain is found at 31-284; that stretch reads YRLDKTLGIG…IHEIRNHPWF (254 aa). Residues 37 to 45 and Lys60 contribute to the ATP site; that span reads LGIGSFGKV. The active-site Proton acceptor is the Asp154. A Phosphothreonine modification is found at Thr188. Positions 382 to 590 are disordered; that stretch reads FTTTTGFNPS…GSNNNSYEGG (209 aa). Composition is skewed to low complexity over residues 391 to 483 and 494 to 586; these read SNSN…SSIS and NLNN…NNNS. Positions 679–727 constitute a KA1 domain; that stretch reads RMVNGKPIKLVLQLFRVAENRYLLDIKKIEGEIFIFFDICSLMLEELNL.

It belongs to the protein kinase superfamily. CAMK Ser/Thr protein kinase family. SNF1 subfamily. Heterotrimer of an alpha catalytic subunit, a beta and a gamma non-catalytic subunits.

The catalysed reaction is L-seryl-[protein] + ATP = O-phospho-L-seryl-[protein] + ADP + H(+). It carries out the reaction L-threonyl-[protein] + ATP = O-phospho-L-threonyl-[protein] + ADP + H(+). Its function is as follows. Activated enzyme phosphorylates target proteins and initiates downstream signaling pathways that shift metabolism from anabolic to catabolic pathways. Acts as a highly sensitive cellular energy sensor. In Dictyostelium discoideum (Social amoeba), this protein is 5'-AMP-activated serine/threonine-protein kinase catalytic subunit alpha (snfA).